The sequence spans 286 residues: F-box/SPRY domain-containing protein 1 (286 aa).

Alanine 2 is subject to N-acetylalanine. An F-box domain is found at 33–82 (SGVGGRLPSRVLELVFSYLELSELRSCALVCKHWYRCLHGDENSEVWRSL). The B30.2/SPRY domain maps to 92-284 (LRTDILCNLP…VTLVYLGKPL (193 aa)).

It belongs to the FBXO45/Fsn family. In terms of assembly, forms a complex with MYCBP2 and SKP1. Interacts with HEY1; leading to FBXO45 nuclear translocation. Interacts (via SPRY domain) with CDH2. In terms of tissue distribution, expressed speciffically in the central nervous system, including cerebellum, medulla oblongata, olfactory bulb, hippocampus, cortex and brain stem.

It localises to the secreted. Its subcellular location is the postsynaptic cell membrane. It is found in the presynaptic cell membrane. The protein localises to the nucleus. It functions in the pathway protein modification; protein ubiquitination. Component of E3 ubiquitin ligase complex consisting of FBXO45, MYCBP2 and SKP1. Functions in substrate recognition but plays also an important role in assembly of the complex. Required for normal neuromuscular synaptogenesis, axon pathfinding and neuronal migration. Regulates neuron migration during brain development through interaction with N-cadherin/CDH2 after secretion via a non-classical mechanism. Plays a role in the regulation of neurotransmission at mature neurons. May control synaptic activity by controlling UNC13A via ubiquitin dependent pathway. Specifically recognizes TP73, promoting its ubiquitination and degradation. Polyubiquitinates NMNAT2, an adenylyltransferase that acts as an axon maintenance factor, and regulates its stability and degradation by the proteasome. Acts also by ubiquitinating FBXW7 during prolonged mitotic arrest and promotes FBXW7 proteasomal degradation. Induces subsequently an increase in mitotic slippage and prevents mitotic cell death. In response to influenza infection, mediates interferon-lambda receptor IFNLR1 polyubiquitination and degradation through the ubiquitin-proteasome system by docking with its intracellular receptor domain. This Mus musculus (Mouse) protein is F-box/SPRY domain-containing protein 1.